Reading from the N-terminus, the 442-residue chain is GTPase Der (442 aa).

EngA-type G domains follow at residues 4–169 (PIVA…PENN) and 178–353 (IKIA…EQAT). GTP contacts are provided by residues 10–17 (GRPNVGKS), 57–61 (DTGGL), 121–124 (NKIE), 184–191 (GRPNVGKS), 231–235 (DTAGM), and 296–299 (NKWD). The region spanning 354 to 438 (RRISTSVLNE…PMRFFIRERE (85 aa)) is the KH-like domain.

Belongs to the TRAFAC class TrmE-Era-EngA-EngB-Septin-like GTPase superfamily. EngA (Der) GTPase family. In terms of assembly, associates with the 50S ribosomal subunit.

GTPase that plays an essential role in the late steps of ribosome biogenesis. The protein is GTPase Der of Heliobacterium modesticaldum (strain ATCC 51547 / Ice1).